A 250-amino-acid polypeptide reads, in one-letter code: tRNA pseudouridine synthase A (250 aa).

Catalysis depends on Asp52, which acts as the Nucleophile. Tyr111 lines the substrate pocket.

Belongs to the tRNA pseudouridine synthase TruA family. As to quaternary structure, homodimer.

It carries out the reaction uridine(38/39/40) in tRNA = pseudouridine(38/39/40) in tRNA. Formation of pseudouridine at positions 38, 39 and 40 in the anticodon stem and loop of transfer RNAs. The polypeptide is tRNA pseudouridine synthase A (Methylorubrum extorquens (strain CM4 / NCIMB 13688) (Methylobacterium extorquens)).